Here is a 39-residue protein sequence, read N- to C-terminus: Photosystem II reaction center protein J (39 aa).

Residues Ile7–Phe27 form a helical membrane-spanning segment.

The protein belongs to the PsbJ family. PSII is composed of 1 copy each of membrane proteins PsbA, PsbB, PsbC, PsbD, PsbE, PsbF, PsbH, PsbI, PsbJ, PsbK, PsbL, PsbM, PsbT, PsbX, PsbY, PsbZ, Psb30/Ycf12, at least 3 peripheral proteins of the oxygen-evolving complex and a large number of cofactors. It forms dimeric complexes.

It is found in the plastid. The protein resides in the chloroplast thylakoid membrane. One of the components of the core complex of photosystem II (PSII). PSII is a light-driven water:plastoquinone oxidoreductase that uses light energy to abstract electrons from H(2)O, generating O(2) and a proton gradient subsequently used for ATP formation. It consists of a core antenna complex that captures photons, and an electron transfer chain that converts photonic excitation into a charge separation. This is Photosystem II reaction center protein J from Trieres chinensis (Marine centric diatom).